Reading from the N-terminus, the 132-residue chain is Large ribosomal subunit protein uL24 (132 aa).

Belongs to the universal ribosomal protein uL24 family. Part of the 50S ribosomal subunit.

In terms of biological role, one of two assembly initiator proteins, it binds directly to the 5'-end of the 23S rRNA, where it nucleates assembly of the 50S subunit. Functionally, one of the proteins that surrounds the polypeptide exit tunnel on the outside of the subunit. This Synechococcus sp. (strain JA-3-3Ab) (Cyanobacteria bacterium Yellowstone A-Prime) protein is Large ribosomal subunit protein uL24.